Here is a 172-residue protein sequence, read N- to C-terminus: NADH-quinone oxidoreductase subunit B (172 aa).

Positions 46, 47, 111, and 141 each coordinate [4Fe-4S] cluster.

This sequence belongs to the complex I 20 kDa subunit family. In terms of assembly, NDH-1 is composed of 14 different subunits. Subunits NuoB, C, D, E, F, and G constitute the peripheral sector of the complex. [4Fe-4S] cluster serves as cofactor.

It is found in the cell membrane. The enzyme catalyses a quinone + NADH + 5 H(+)(in) = a quinol + NAD(+) + 4 H(+)(out). NDH-1 shuttles electrons from NADH, via FMN and iron-sulfur (Fe-S) centers, to quinones in the respiratory chain. The immediate electron acceptor for the enzyme in this species is believed to be a menaquinone. Couples the redox reaction to proton translocation (for every two electrons transferred, four hydrogen ions are translocated across the cytoplasmic membrane), and thus conserves the redox energy in a proton gradient. This is NADH-quinone oxidoreductase subunit B from Bacillus mycoides (strain KBAB4) (Bacillus weihenstephanensis).